The following is a 147-amino-acid chain: Large ribosomal subunit protein uL11 (147 aa).

Belongs to the universal ribosomal protein uL11 family. In terms of assembly, part of the ribosomal stalk of the 50S ribosomal subunit. Interacts with L10 and the large rRNA to form the base of the stalk. L10 forms an elongated spine to which L12 dimers bind in a sequential fashion forming a multimeric L10(L12)X complex. In terms of processing, one or more lysine residues are methylated.

In terms of biological role, forms part of the ribosomal stalk which helps the ribosome interact with GTP-bound translation factors. This chain is Large ribosomal subunit protein uL11, found in Phocaeicola vulgatus (strain ATCC 8482 / DSM 1447 / JCM 5826 / CCUG 4940 / NBRC 14291 / NCTC 11154) (Bacteroides vulgatus).